The primary structure comprises 142 residues: Large ribosomal subunit protein uL13 (142 aa).

The protein belongs to the universal ribosomal protein uL13 family. As to quaternary structure, part of the 50S ribosomal subunit.

Functionally, this protein is one of the early assembly proteins of the 50S ribosomal subunit, although it is not seen to bind rRNA by itself. It is important during the early stages of 50S assembly. This is Large ribosomal subunit protein uL13 from Bordetella avium (strain 197N).